A 352-amino-acid chain; its full sequence is Non-disjunction protein 1 (352 aa).

Interacts with MPS3.

Its subcellular location is the nucleus. The protein localises to the chromosome. It localises to the telomere. Functionally, required for telomeric clustering (bouquet stage) during meiosis 1 prophase, formation and efficient homolog pairing, meiosis 1 disjunction, and telomere deletion during meiosis. Also promotes meiotic recombination. The polypeptide is Non-disjunction protein 1 (NDJ1) (Saccharomyces cerevisiae (strain ATCC 204508 / S288c) (Baker's yeast)).